Here is a 433-residue protein sequence, read N- to C-terminus: Glucose-6-phosphate isomerase (433 aa).

Residue Glu-285 is the Proton donor of the active site. Catalysis depends on residues His-306 and Lys-421.

Belongs to the GPI family.

Its subcellular location is the cytoplasm. It catalyses the reaction alpha-D-glucose 6-phosphate = beta-D-fructose 6-phosphate. The protein operates within carbohydrate biosynthesis; gluconeogenesis. Its pathway is carbohydrate degradation; glycolysis; D-glyceraldehyde 3-phosphate and glycerone phosphate from D-glucose: step 2/4. Its function is as follows. Catalyzes the reversible isomerization of glucose-6-phosphate to fructose-6-phosphate. This Mycoplasma mobile (strain ATCC 43663 / 163K / NCTC 11711) (Mesomycoplasma mobile) protein is Glucose-6-phosphate isomerase.